Consider the following 101-residue polypeptide: Small ribosomal subunit protein uS14 (101 aa).

It belongs to the universal ribosomal protein uS14 family. In terms of assembly, part of the 30S ribosomal subunit. Contacts proteins S3 and S10.

In terms of biological role, binds 16S rRNA, required for the assembly of 30S particles and may also be responsible for determining the conformation of the 16S rRNA at the A site. The protein is Small ribosomal subunit protein uS14 of Rhizobium johnstonii (strain DSM 114642 / LMG 32736 / 3841) (Rhizobium leguminosarum bv. viciae).